A 478-amino-acid chain; its full sequence is Isoeugenol monooxygenase (478 aa).

4 residues coordinate Fe cation: His167, His218, His282, and His471.

This sequence belongs to the carotenoid oxygenase family. Fe(2+) serves as cofactor.

It carries out the reaction (E)-isoeugenol + O2 = vanillin + acetaldehyde. With respect to regulation, inhibited by Co(2+), Ni(2+) and Zn(2+), which may inhibit enzyme activity by replacing iron in the catalytic residues. Inhibited by incubation with high concentrations of the iron chelators 1,10-phenanthroline and Tiron. However, iron is not completely removed by the chelators, suggesting that iron is tightly bound to the enzyme. In terms of biological role, involved in isoeugenol degradation. Catalyzes the oxidative cleavage of the side chain double-bond of isoeugenol to form vanillin and acetaldehyde. This is Isoeugenol monooxygenase from Pseudomonas nitroreducens.